The sequence spans 844 residues: Putative ubiquitin thioesterase 232R (844 aa).

Disordered regions lie at residues 136–223, 261–287, 326–377, and 422–541; these read NSST…DEAE, SRRKSPSPSPVPPSTRCDPTTTAPPME, LLNG…PELT, and QKKQ…KLSV. Low complexity predominate over residues 137–216; it reads SSTRSRSPSV…PSRQSVRQSS (80 aa). Composition is skewed to low complexity over residues 332 to 341 and 354 to 364; these read RPSPSLPQSR and RSPSVGSPSVR. The segment covering 429–438 has biased composition (pro residues); the sequence is SPSPTPPSPV. Residues 472-485 are compositionally biased toward basic and acidic residues; the sequence is VQKKMGKSGEREPK. Residues 504 to 518 show a composition bias toward low complexity; it reads SLRSRLSTQQQTQQS. Basic and acidic residues predominate over residues 526–535; sequence ESIKPEESVR. The region spanning 590–725 is the OTU domain; sequence YTVKQVSGDG…NYHYTSLVPI (136 aa). Residue aspartate 598 is part of the active site. Catalysis depends on cysteine 601, which acts as the Nucleophile. Histidine 718 is an active-site residue.

The enzyme catalyses Thiol-dependent hydrolysis of ester, thioester, amide, peptide and isopeptide bonds formed by the C-terminal Gly of ubiquitin (a 76-residue protein attached to proteins as an intracellular targeting signal).. Hydrolase that can remove conjugated ubiquitin from proteins and may therefore play an important regulatory role at the level of protein turnover by preventing degradation. This is Putative ubiquitin thioesterase 232R from Aedes vexans (Inland floodwater mosquito).